The following is a 339-amino-acid chain: Annexin A2 (339 aa).

The residue at position 2 (Ser-2) is an N-acetylserine. An S100A10-binding site region spans residues 2-24 (STVHEILCKLSLEGDHSTPPSAY). The residue at position 24 (Tyr-24) is a Phosphotyrosine; by SRC. Ser-26 bears the Phosphoserine; by PKC mark. Annexin repeat units follow at residues 33 to 104 (FDAE…GLLK) and 105 to 176 (TPAQ…ALAK). At Lys-49 the chain carries N6-acetyllysine; alternate. Lys-49 is covalently cross-linked (Glycyl lysine isopeptide (Lys-Gly) (interchain with G-Cter in SUMO1); alternate). Residue Lys-49 forms a Glycyl lysine isopeptide (Lys-Gly) (interchain with G-Cter in SUMO2); alternate linkage. N6-acetyllysine is present on Lys-152. Ser-184 carries the post-translational modification Phosphoserine. 2 Annexin repeats span residues 189 to 261 (ELID…NLVQ) and 265 to 336 (NKPL…YLCG). Tyr-199 is modified (phosphotyrosine). An N6-acetyllysine modification is found at Lys-227.

The protein belongs to the annexin family. In terms of assembly, heterotetramer containing 2 light chains of S100A10/p11 and 2 heavy chains of ANXA2/p36. Interacts with ATP1B1. Interacts with DYSF. Interacts with COCH. Interacts (via repeat Annexin 1) with PCSK9 (via the C-terminal domain); the interaction inhibits the degradation of LDLR. Interacts with CEACAM1 (via the cytoplasmic domain); this interaction is regulated by phosphorylation of CEACAM1. Interacts with APPL2 and APPL1; targets APPL2 to endosomes and acting in parallel to RAB5A. Interacts with S100A4. May interact with UBAP2. In terms of processing, ISGylated. As to expression, expressed strongly in velvet antler reserve mesenchyme.

The protein localises to the secreted. It localises to the extracellular space. It is found in the extracellular matrix. Its subcellular location is the basement membrane. In terms of biological role, calcium-regulated membrane-binding protein whose affinity for calcium is greatly enhanced by anionic phospholipids. It binds two calcium ions with high affinity. May be involved in heat-stress response. Inhibits PCSK9-enhanced LDLR degradation, probably reduces PCSK9 protein levels via a translational mechanism but also competes with LDLR for binding with PCSK9. Binds to endosomes damaged by phagocytosis of particulate wear debris and participates in endosomal membrane stabilization, thereby limiting NLRP3 inflammasome activation. Required for endothelial cell surface plasmin generation and may support fibrinolytic surveillance and neoangiogenesis. The sequence is that of Annexin A2 (ANXA2) from Cervus elaphus (Red deer).